The sequence spans 190 residues: uncharacterized protein (190 aa).

The protein to Synechocystis PCC 6803 sll1609 and slr1290.

This is an uncharacterized protein from Synechocystis sp. (strain ATCC 27184 / PCC 6803 / Kazusa).